Here is a 563-residue protein sequence, read N- to C-terminus: Membrane protein insertase YidC (563 aa).

A helical transmembrane segment spans residues 6-26 (TVLWMIFSFSLLLLWNNWQIH). Positions 36–70 (PAPEAAATQQPKADANGTAASSTASIPSSPAAAPA) are disordered. Over residues 54–70 (AASSTASIPSSPAAAPA) the composition is skewed to low complexity. The next 4 membrane-spanning stretches (helical) occupy residues 373-393 (WGWT…PLAA), 443-463 (LPMV…LASV), 482-502 (PFFI…KLNP), and 512-532 (VMMI…AGLV).

This sequence belongs to the OXA1/ALB3/YidC family. Type 1 subfamily. Interacts with the Sec translocase complex via SecD. Specifically interacts with transmembrane segments of nascent integral membrane proteins during membrane integration.

The protein localises to the cell inner membrane. In terms of biological role, required for the insertion and/or proper folding and/or complex formation of integral membrane proteins into the membrane. Involved in integration of membrane proteins that insert both dependently and independently of the Sec translocase complex, as well as at least some lipoproteins. Aids folding of multispanning membrane proteins. This Bordetella parapertussis (strain 12822 / ATCC BAA-587 / NCTC 13253) protein is Membrane protein insertase YidC.